Reading from the N-terminus, the 272-residue chain is Ribonuclease 3 (272 aa).

The disordered stretch occupies residues 1–22 (MSLQFLRSEASDGAGETSDASS). Residues 31–162 (TATHLARLTG…LVGAIYLDQG (132 aa)) form the RNase III domain. Glu75 contributes to the Mg(2+) binding site. Asp79 is a catalytic residue. Asp148 and Glu151 together coordinate Mg(2+). Glu151 is a catalytic residue. The 70-residue stretch at 189-258 (NYKSRLIEYT…AKEAMKRLES (70 aa)) folds into the DRBM domain.

This sequence belongs to the ribonuclease III family. Homodimer. The cofactor is Mg(2+).

The protein localises to the cytoplasm. It carries out the reaction Endonucleolytic cleavage to 5'-phosphomonoester.. In terms of biological role, digests double-stranded RNA. Involved in the processing of primary rRNA transcript to yield the immediate precursors to the large and small rRNAs (23S and 16S). Processes some mRNAs, and tRNAs when they are encoded in the rRNA operon. Processes pre-crRNA and tracrRNA of type II CRISPR loci if present in the organism. The protein is Ribonuclease 3 of Chlorobaculum tepidum (strain ATCC 49652 / DSM 12025 / NBRC 103806 / TLS) (Chlorobium tepidum).